A 188-amino-acid chain; its full sequence is MTRASELKKSDVIEVNGTLYAIRQIEVQSPSARGAATLYRVKASAVGGGPKFEERFKGDDDVATVALQRRAVQFSYVDGDDYIFMDNEDFSQYLLKQDDIRDELAFITEETQGVLALKVEESVIGLELPASVVLDVTETTPAMKAASSSARTKPATLNTGLVVQVPEYIVAGEKVRVNTAERKFMSRA.

The protein belongs to the elongation factor P family.

The protein is Elongation factor P-like protein of Alcanivorax borkumensis (strain ATCC 700651 / DSM 11573 / NCIMB 13689 / SK2).